We begin with the raw amino-acid sequence, 238 residues long: IkB-like protein (238 aa).

4 ANK repeats span residues 48-77 (GSSVFMWICIYGRIDFLKFLFEQESYPGEI), 86-115 (DGNSALHYLAEKKNHLILEEVLGYFGKNGT), 123-152 (NGMTPVMKAAIRGRTSNVLSLIKFGADPTQ), and 157-187 (RGFTAWDWAVFTGNMELVKSLNHDYQKPLYM). The Nuclear localization signal motif lies at 80–86 (PHRRDKD). The Nuclear localization signal motif lies at 202–213 (KKKPKIIITGCK). Positions 205–212 (PKIIITGC) match the PxIxITxC motif; Interaction with host PPP3CA motif. The short motif at 227–230 (FLCV) is the FLCV motif element.

It belongs to the asfivirus A238L family. Interacts with host PPIA. Interacts with host PPP3CA/Calcineurin. Interacts with host RELA/p65; interaction of the 32 kDa form with host RELA results in the formation of a stable complex with NF-kappa-B. Interacts with host PPP3R1. Interacts with host EP300; this interaction inhibits the association of host EP300 with host RELA, JUN and NFATC2. In terms of processing, the protein exists in a 28 kDa and a 32 kDa form, probably due to post-translational modifications which are neither phosphorylation, nor sumoylation.

The protein resides in the host nucleus. It is found in the host cytoplasm. In terms of biological role, I-kappa-B- (IkB)-like protein that inhibits the binding of NF-kappa-B to DNA, thereby down-regulating pro-inflammatory cytokine production. Forms a heterodimer with the NF-kappa-B subunit RELA/p65 and prevents the activation of the NF-kappa-B transcription factor. Also inhibits the host calcineurin phosphatase activity, which is required for the induction of nuclear factor of activated T cells(NFAT)-dependent immune response genes. Inhibits calcineurin function, which is required for the induction of nuclear factor of activated T cells (NFAT)-dependent immune response genes. Prevents the binding of substrates to calcineurin without affecting the phosphatase activity. Does not contain the serine residues that are phosphorylated by host IkB kinase and thus is not degraded following stimulation of the NFkB pathway. The polypeptide is IkB-like protein (A238L) (African swine fever virus (strain Badajoz 1971 Vero-adapted) (Ba71V)).